The primary structure comprises 317 residues: Melanocyte-stimulating hormone receptor (317 aa).

Residues 1–37 are Extracellular-facing; sequence MPVQGSQRRLLGSLNSTPTATPHLGLAANQTGARCLE. Asparagine 29 carries an N-linked (GlcNAc...) asparagine glycan. A helical membrane pass occupies residues 38–63; it reads MSIPDGLFLSLGLVSLVENVLVVTAI. Topologically, residues 64-72 are cytoplasmic; sequence AKNRNLHSP. Residues 73 to 93 form a helical membrane-spanning segment; sequence MYCFICCLALSDLLVSGSNML. Topologically, residues 94-118 are extracellular; sequence ETAVTLLLEAGALAARAAVVQQLDN. The chain crosses the membrane as a helical span at residues 119-140; that stretch reads VIDVITCSSMLSSLCFLGAIAV. At 141–163 the chain is on the cytoplasmic side; it reads DRYISIFYALRYHSIVTLPRARR. A helical transmembrane segment spans residues 164 to 183; the sequence is AIAAIWVASVLCSTLFIAYY. Residues 184-191 lie on the Extracellular side of the membrane; it reads DHAAVLLC. A helical transmembrane segment spans residues 192–211; it reads LVVFFLAMLVLMAVLYVHML. At 212–240 the chain is on the cytoplasmic side; it reads ARACQHAQGIARLHKRQRLAHQGFGLKGA. The chain crosses the membrane as a helical span at residues 241-266; it reads ATLTILLGIFFLCWGPFFLHLTLIVL. The Extracellular segment spans residues 267-279; the sequence is CPQHPTCSCIFKN. Residues 280–300 traverse the membrane as a helical segment; the sequence is FNLFLTLIICNAIIDPLIYAF. The Cytoplasmic segment spans residues 301 to 317; it reads RSQELRRTLKEVLLCSW. The S-palmitoyl cysteine moiety is linked to residue cysteine 315.

The protein belongs to the G-protein coupled receptor 1 family. As to quaternary structure, interacts with MGRN1, but does not undergo MGRN1-mediated ubiquitination; this interaction competes with GNAS-binding and thus inhibits agonist-induced cAMP production. Interacts with OPN3; the interaction results in a decrease in MC1R-mediated cAMP signaling and ultimately a decrease in melanin production in melanocytes.

Its subcellular location is the cell membrane. Receptor for MSH (alpha, beta and gamma) and ACTH. The activity of this receptor is mediated by G proteins which activate adenylate cyclase. Mediates melanogenesis, the production of eumelanin (black/brown) and phaeomelanin (red/yellow), via regulation of cAMP signaling in melanocytes. The sequence is that of Melanocyte-stimulating hormone receptor (MC1R) from Macaca nemestrina (Pig-tailed macaque).